Here is a 184-residue protein sequence, read N- to C-terminus: ATP synthase subunit b, chloroplastic (184 aa).

The helical transmembrane segment at 31–49 (IINPSVVLSVLIYFGKGVL) threads the bilayer.

Belongs to the ATPase B chain family. In terms of assembly, F-type ATPases have 2 components, F(1) - the catalytic core - and F(0) - the membrane proton channel. F(1) has five subunits: alpha(3), beta(3), gamma(1), delta(1), epsilon(1). F(0) has four main subunits: a(1), b(1), b'(1) and c(10-14). The alpha and beta chains form an alternating ring which encloses part of the gamma chain. F(1) is attached to F(0) by a central stalk formed by the gamma and epsilon chains, while a peripheral stalk is formed by the delta, b and b' chains.

The protein localises to the plastid. It localises to the chloroplast thylakoid membrane. Functionally, f(1)F(0) ATP synthase produces ATP from ADP in the presence of a proton or sodium gradient. F-type ATPases consist of two structural domains, F(1) containing the extramembraneous catalytic core and F(0) containing the membrane proton channel, linked together by a central stalk and a peripheral stalk. During catalysis, ATP synthesis in the catalytic domain of F(1) is coupled via a rotary mechanism of the central stalk subunits to proton translocation. In terms of biological role, component of the F(0) channel, it forms part of the peripheral stalk, linking F(1) to F(0). This Pinus koraiensis (Korean pine) protein is ATP synthase subunit b, chloroplastic.